The following is an 829-amino-acid chain: Disintegrin and metalloproteinase domain-containing protein 23 (829 aa).

The first 55 residues, M1–S55, serve as a signal peptide directing secretion. Residues S56–R283 constitute a propeptide that is removed on maturation. N72, N92, N97, and N260 each carry an N-linked (GlcNAc...) asparagine glycan. Topologically, residues A284–N789 are extracellular. One can recognise a Peptidase M12B domain in the interval K296–P493. 3 disulfide bridges follow: C405–C488, C447–C472, and C449–C456. The 87-residue stretch at P499–D585 folds into the Disintegrin domain. N544 and N545 each carry an N-linked (GlcNAc...) asparagine glycan. Cysteines 557 and 577 form a disulfide. N-linked (GlcNAc...) asparagine glycans are attached at residues N661 and N729. The 38-residue stretch at N729–S766 folds into the EGF-like domain. Intrachain disulfides connect C733/C748, C742/C754, and C756/C765. Residues L790–G810 traverse the membrane as a helical segment. Over W811–I829 the chain is Cytoplasmic.

As to quaternary structure, can bind to LGI1 and LGI4. Brain specific.

Its subcellular location is the cell membrane. The protein localises to the secreted. Its function is as follows. May play a role in cell-cell and cell-matrix interactions. This is a non-catalytic metalloprotease-like protein. The sequence is that of Disintegrin and metalloproteinase domain-containing protein 23 (Adam23) from Mus musculus (Mouse).